The sequence spans 67 residues: Large ribosomal subunit protein bL31 (67 aa).

This sequence belongs to the bacterial ribosomal protein bL31 family. Type A subfamily. Part of the 50S ribosomal subunit.

Functionally, binds the 23S rRNA. This is Large ribosomal subunit protein bL31 from Leptospira borgpetersenii serovar Hardjo-bovis (strain JB197).